A 179-amino-acid polypeptide reads, in one-letter code: MSRIGKNPVPVPDKVTVSLDGLTVKVKGPKGELERTLPDGVSVSQDNNCIVVAPSTSKRFSRERHGLCRTLVANMIEGVNNGYSKSLEIVGVGSRAQVKGKTLVVSAGYSHPVEMEPPEGITFKVENNTKVIVSGIDKELVGNEAAKVRAIRPPEPYKGKGIKYEGERIMRKAGKSGKK.

It belongs to the universal ribosomal protein uL6 family. In terms of assembly, part of the 50S ribosomal subunit.

In terms of biological role, this protein binds to the 23S rRNA, and is important in its secondary structure. It is located near the subunit interface in the base of the L7/L12 stalk, and near the tRNA binding site of the peptidyltransferase center. In Parasynechococcus marenigrum (strain WH8102), this protein is Large ribosomal subunit protein uL6.